We begin with the raw amino-acid sequence, 1546 residues long: MKDFNKVRIAIASPEKIREWSFGEVEKPETINYRTLKPEREGLFDERIFGPIKDYECACGKYKRQRYEGKVCERCGVEVTSSKVRRYRMGHIDLATPAAHIWYVKDSPSKIGTLLDLSAGQLEKVLYFSSFIVTKPFNAQKDGRPLKRGELLSDDEYRELRFGRQETYTIPNSVEDVEIRDGEYVTRGQILGGNVVSKMDGLAQYRFPRRAVIAYSEGVEASLPLPADTLVEQETFRAGEILAELEQDVQITAPVAGTVFMHDLGEDSVMIELREGVEANDSDEEEAADPIRGEVLARVYVPHGMNVQVAEGEVIEAGALLADASEGARLRVSRDSNLSGVTFPKKKGDVTVTAHWTRRVEYPIDPTMHVLVGDGSEVTKGQRVIGAIDKEEEVIAEADGVITLHQPASILVSKAKVYAYDDEPLVVNGDRVEPGDELADDGNLRSEISGRIELDLVRKQVRVIESYDFEAKMGAEAVKELLDELNLDELETELNEQMKDNSRHKRAKARKRLEVTRSFKASGNNPSWMILGTVPVMPPDLRPMVQVDGGRFATSDLNDLYRRLINRNNRLKKLMSQGAPDMIIRNEKRMLQEAVDALIDNGRRGSPVTNPGSDRSLRSLTDLLGGKQGRFRQNLLGKRVDYSGRSVIVVGPQLKLHQCGVPKRMALELFKPFLFKVLEEKGEVTNIKQARKMLERYRDTRDSVWDALEEVIEDKVVLLNRAPTLHRLGIQAFEPVLVEGQSIQLHPLVCEAFNADFDGDQMAIHVPLSAQAQAEARIQMLASHNLLSPANGEPNVKPSRDIILGIFTLTQLRRDNLGAGTEYASEADALAAFDEGKLSLNSPVMVNGVETSPGRLRYTFSNPDEALHAVEQGEIDHQDHVRIRLNGQVYETSAGRVQFRRMVQEALGAQGGLIDTLVDLETTYEKDALKDMVMACFKHLGIEATAGLLDGLKEGGFKLSTTSGITIGIDDIVLPPNKGELLAEADQMLAEIEQNFEFGFMTEEERYKQVVQLWNNTTDAVKDAVFENFSKNYPFNPLWIMSQSGARGNPQQIRQLAGMRGLMARPDGSTIEVPIRASFREGLTVLEYFISTHGARKGGADTALRTADSGYLTRKLVDVAHEVVVRDVDCGSTDSTVMPLGATDERTGEWRSRKGSEIETSIYGRTLTADVEFSDGRVIPEGEMLSMEDVKAIAKDAKHIGEVFVRTPLNCRVKAGVCQKCYGYDLSQAKPVSMGEAVGVVAAESIGEPGTQLTMRTFHTGGIAGGGDITMGLPRVIELFEARKPKTQAVVADRDGVIRIEEEEERYLVRIEADDEQYSSKTATKVPRVLRMTVKDGERVEAGQPITRGAVNPHDLLMYKDTDAAQRYLVEEVQRVYRSQGVKVHDKHIEVIVRQMLRWVEVTDGGDTTLLEGQTVEHWEVDQANEALAEGQTPASWKPVLLGITKSSLTTKSWLSAASFQHTTHVLTEASMRGQVDDLIGLKENVILGKLIPAGTGLLTVREMQVADDRTLEKYGEGSTSSDAVTGGQRYDDTRPGSSINPGYGD.

Zn(2+) contacts are provided by C57, C59, C72, and C75. Positions 756, 758, and 760 each coordinate Mg(2+). 4 residues coordinate Zn(2+): C1130, C1211, C1218, and C1221. A disordered region spans residues 1512-1546; it reads LEKYGEGSTSSDAVTGGQRYDDTRPGSSINPGYGD. Polar residues predominate over residues 1536 to 1546; the sequence is PGSSINPGYGD.

Belongs to the RNA polymerase beta' chain family. As to quaternary structure, the RNAP catalytic core consists of 2 alpha, 1 beta, 1 beta' and 1 omega subunit. When a sigma factor is associated with the core the holoenzyme is formed, which can initiate transcription. Mg(2+) is required as a cofactor. The cofactor is Zn(2+).

It catalyses the reaction RNA(n) + a ribonucleoside 5'-triphosphate = RNA(n+1) + diphosphate. Functionally, DNA-dependent RNA polymerase catalyzes the transcription of DNA into RNA using the four ribonucleoside triphosphates as substrates. In Deinococcus radiodurans (strain ATCC 13939 / DSM 20539 / JCM 16871 / CCUG 27074 / LMG 4051 / NBRC 15346 / NCIMB 9279 / VKM B-1422 / R1), this protein is DNA-directed RNA polymerase subunit beta'.